A 62-amino-acid polypeptide reads, in one-letter code: Keratin-associated protein 8-1 (62 aa).

The 12 X 2 AA repeats of G-[YCGS] stretch occupies residues Gly12–Cys53.

It belongs to the KRTAP type 8 family. As to quaternary structure, interacts with wool keratins. As to expression, wool.

In the wool cortex, wool keratin intermediate filaments are embedded in an interfilamentous matrix, consisting of hair keratin-associated proteins (KRTAP), which are essential for the formation of a rigid and resistant wool shaft through their extensive disulfide bond cross-linking with abundant cysteine residues of wool keratins. The matrix proteins include the high-sulfur and high-glycine-tyrosine keratins. The polypeptide is Keratin-associated protein 8-1 (KRTAP8-1) (Ovis aries (Sheep)).